The following is a 293-amino-acid chain: 1D-myo-inositol 2-acetamido-2-deoxy-alpha-D-glucopyranoside deacetylase (293 aa).

Zn(2+) is bound by residues His-16, Asp-19, and His-156.

The protein belongs to the MshB deacetylase family. The cofactor is Zn(2+).

It catalyses the reaction 1D-myo-inositol 2-acetamido-2-deoxy-alpha-D-glucopyranoside + H2O = 1D-myo-inositol 2-amino-2-deoxy-alpha-D-glucopyranoside + acetate. Functionally, catalyzes the deacetylation of 1D-myo-inositol 2-acetamido-2-deoxy-alpha-D-glucopyranoside (GlcNAc-Ins) in the mycothiol biosynthesis pathway. This chain is 1D-myo-inositol 2-acetamido-2-deoxy-alpha-D-glucopyranoside deacetylase, found in Nakamurella multipartita (strain ATCC 700099 / DSM 44233 / CIP 104796 / JCM 9543 / NBRC 105858 / Y-104) (Microsphaera multipartita).